Here is a 121-residue protein sequence, read N- to C-terminus: Large ribosomal subunit protein uL14c (121 aa).

This sequence belongs to the universal ribosomal protein uL14 family. Part of the 50S ribosomal subunit.

The protein resides in the plastid. It localises to the chloroplast. In terms of biological role, binds to 23S rRNA. This is Large ribosomal subunit protein uL14c from Trieres chinensis (Marine centric diatom).